Here is a 42-residue protein sequence, read N- to C-terminus: MKFFQAAALLLAMFAALANAEPVPQPGTVLIQTDNTQYIRTG.

The N-terminal stretch at 1–20 (MKFFQAAALLLAMFAALANA) is a signal peptide. A propeptide spans 21–26 (EPVPQP) (removed by a dipeptidylpeptidase). Thr-41 carries the threonine amide modification.

In terms of tissue distribution, hemolymph (at protein level).

The protein localises to the secreted. Its function is as follows. Peptide which plays a role in the humoral immune response to a subset of filamentous fungi, including F.oxysporum and F.verticillioides. The protein is Daisho1 of Drosophila melanogaster (Fruit fly).